The sequence spans 474 residues: Tumor necrosis factor receptor superfamily member 1B (474 aa).

Positions 1-22 (MAPAALWVALVFELQLWATGHT) are cleaved as a signal peptide. The Extracellular segment spans residues 23 to 258 (VPAQVVLTPY…PIIEQSTKGG (236 aa)). Thr-30 is a glycosylation site (O-linked (GalNAc...) threonine). 4 TNFR-Cys repeats span residues 39–77 (ECQI…TVCA), 78–119 (DCEA…NRVC), 120–164 (ACEA…VLCK), and 165–203 (ACAP…AVCA). Disulfide bonds link Cys-40/Cys-54, Cys-55/Cys-68, Cys-58/Cys-76, Cys-79/Cys-94, Cys-97/Cys-111, Cys-101/Cys-119, Cys-121/Cys-127, Cys-136/Cys-145, Cys-139/Cys-163, and Cys-166/Cys-181. Asn-69 carries an N-linked (GlcNAc...) asparagine glycan. Residue Asn-195 is glycosylated (N-linked (GlcNAc...) asparagine). Residues Thr-208 and Thr-224 are each glycosylated (O-linked (GalNAc...) threonine). A disordered region spans residues 220 to 243 (QPEPTRSQPLDQEPGPSQTPSILT). The chain crosses the membrane as a helical span at residues 259 to 288 (ISLPIGLIVGVTSLGLLMLGLVNCIILVQR). The Cytoplasmic segment spans residues 289–474 (KKKPSCLQRD…WFDQIAVKVA (186 aa)). 3 disordered regions span residues 295–314 (LQRD…DAVG), 321–378 (LTTA…GSHG), and 397–463 (SQCS…PSQA). A compositionally biased stretch (basic and acidic residues) spans 297-310 (RDAKVPHVPDEKSQ). 2 stretches are compositionally biased toward low complexity: residues 324–338 (APSS…SASA) and 363–378 (ARAS…GSHG). Ser-331 is modified (phosphoserine). Over residues 429 to 442 (ECPSQSPCETTETL) the composition is skewed to polar residues.

In terms of assembly, binds to TRAF2. Interacts with BMX. Interacts (activated form) with XPNPEP3.

The protein localises to the membrane. In terms of biological role, receptor with high affinity for TNFSF2/TNF-alpha and approximately 5-fold lower affinity for homotrimeric TNFSF1/lymphotoxin-alpha. The TRAF1/TRAF2 complex recruits the apoptotic suppressors BIRC2 and BIRC3 to TNFRSF1B/TNFR2. This Mus musculus (Mouse) protein is Tumor necrosis factor receptor superfamily member 1B (Tnfrsf1b).